The sequence spans 786 residues: MWGSVAVVWAICLACIQPAVFPWILPVRSNKDRPRPAHGALTEKVECFSDYMTLQIPSSHVQGLKQWLVGVLRLPGSKRAPNHLDSLLTKCGYLLHPAHEGGFIFRALYSGCFVQKEKANYRLEIRMFQKGAKRLKQSDRYIMRCPMMVARLGEQSVRCHPSFIQVSRPWPPRTDAGQTPWLLSLRGELVASLEDASLMGLEVDIGATMVTIQSPRQELLQRQEVWNTSLELLPLWLVSGSYAYSFEAACPLVSSQPGSEISVHIPKQRLGLVKRGSLVEESLSPRFLQVQQTDTFTVAEDRDFVIVSIPSMRLLQDQPCQKARESPGTQAFYRVDLSLDFAEMDSPVHWTVENFFQCVGSREDSLFSTVTPRTTLPTQSPGWETTPAETPPAASPPLQTPQMAVLEEPPQHFVHQSAKESTKQELAAAFMQITRPARGSWVSMASPSSSAMQEHQGPQTPPEKADLSPHPQTPATLSSEHTEVSQAGPGPSHYVSLAPNSLSTHLSSEITSSLWPSWPSDGPPMLLSSEPSVKLTEVPRATRAGQDSIQPSRSPFPPGELSRETVNSTESTEPIPREPAYIREEFPPFTKSFMSSLAEEGLIFHPDPKRPQERPIVKAEKPLQNDHGPSGEETRHYLDLSTSEPSQEMKELGVDATFTTSRRRQPDARAYLGTSRPELTGRPRVGTAALQTTLHKGLLASTSERPAAPSEGALQLESAPSWPEGWHDLGAAHTASPLSSHTHSPLVPTQAMFPGSDEPGNSLPGSQGSVESRLLPTTDSHQSPEL.

The signal sequence occupies residues 1-18 (MWGSVAVVWAICLACIQP).

In terms of tissue distribution, expressed specifically by cells of the ciliated left-right organizer.

Its function is as follows. Plays a role in left-right patterning process. The protein is Ciliated left-right organizer ZP-N domains-containing protein (Ciroz) of Mus musculus (Mouse).